A 344-amino-acid chain; its full sequence is Protein-glutamate methylesterase/protein-glutamine glutaminase 1 (344 aa).

The region spanning 5–122 (RVLVVDDSAT…GTQEALAEIV (118 aa)) is the Response regulatory domain. Asp-56 carries the post-translational modification 4-aspartylphosphate. Residues 151-343 (FMPSGDIVAI…QSILDLASAR (193 aa)) enclose the CheB-type methylesterase domain. Residues Ser-163, His-189, and Asp-285 contribute to the active site.

It belongs to the CheB family. Phosphorylated by CheA. Phosphorylation of the N-terminal regulatory domain activates the methylesterase activity.

The protein localises to the cytoplasm. The enzyme catalyses [protein]-L-glutamate 5-O-methyl ester + H2O = L-glutamyl-[protein] + methanol + H(+). The catalysed reaction is L-glutaminyl-[protein] + H2O = L-glutamyl-[protein] + NH4(+). In terms of biological role, involved in chemotaxis. Part of a chemotaxis signal transduction system that modulates chemotaxis in response to various stimuli. Catalyzes the demethylation of specific methylglutamate residues introduced into the chemoreceptors (methyl-accepting chemotaxis proteins or MCP) by CheR. Also mediates the irreversible deamidation of specific glutamine residues to glutamic acid. The polypeptide is Protein-glutamate methylesterase/protein-glutamine glutaminase 1 (Caulobacter vibrioides (strain ATCC 19089 / CIP 103742 / CB 15) (Caulobacter crescentus)).